We begin with the raw amino-acid sequence, 159 residues long: MKIRILTIGQKMPAWVLTGFEDYFKRIQPFVQTQVIKLPMAKRGKNDSEADILKYCQIEGESILNALKPNETLIALEVGGRELSTEKLADTMKQWMLEGNDVALAIGGPDGLSDQVRKAAAWHWSLSKLTMPHPLVRILLIEQLYRAMSINHNHPYHRA.

S-adenosyl-L-methionine is bound by residues Leu76, Gly107, and Leu126–Met131.

It belongs to the RNA methyltransferase RlmH family. In terms of assembly, homodimer.

The protein resides in the cytoplasm. The enzyme catalyses pseudouridine(1915) in 23S rRNA + S-adenosyl-L-methionine = N(3)-methylpseudouridine(1915) in 23S rRNA + S-adenosyl-L-homocysteine + H(+). Functionally, specifically methylates the pseudouridine at position 1915 (m3Psi1915) in 23S rRNA. This Acinetobacter baumannii (strain SDF) protein is Ribosomal RNA large subunit methyltransferase H.